The chain runs to 427 residues: Diaminobutyrate--2-oxoglutarate transaminase (427 aa).

The residue at position 269 (Lys-269) is an N6-(pyridoxal phosphate)lysine.

Belongs to the class-III pyridoxal-phosphate-dependent aminotransferase family. The cofactor is pyridoxal 5'-phosphate.

It catalyses the reaction L-2,4-diaminobutanoate + 2-oxoglutarate = L-aspartate 4-semialdehyde + L-glutamate. It functions in the pathway amine and polyamine biosynthesis; ectoine biosynthesis; L-ectoine from L-aspartate 4-semialdehyde: step 1/3. Catalyzes reversively the conversion of L-aspartate beta-semialdehyde (ASA) to L-2,4-diaminobutyrate (DABA) by transamination with L-glutamate. The protein is Diaminobutyrate--2-oxoglutarate transaminase (ectB) of Halalkalibacterium halodurans (strain ATCC BAA-125 / DSM 18197 / FERM 7344 / JCM 9153 / C-125) (Bacillus halodurans).